Reading from the N-terminus, the 89-residue chain is MALSVEEKAQIVTDFQQAAGDTGSPEVQVALLTANINKLQGHFKANGKDHHSRRGLIRMVNQRRKLLDYLKGKDTTRYSALIGRLGLRR.

The protein belongs to the universal ribosomal protein uS15 family. Part of the 30S ribosomal subunit. Forms a bridge to the 50S subunit in the 70S ribosome, contacting the 23S rRNA.

In terms of biological role, one of the primary rRNA binding proteins, it binds directly to 16S rRNA where it helps nucleate assembly of the platform of the 30S subunit by binding and bridging several RNA helices of the 16S rRNA. Its function is as follows. Forms an intersubunit bridge (bridge B4) with the 23S rRNA of the 50S subunit in the ribosome. The chain is Small ribosomal subunit protein uS15 from Pseudomonas putida (strain GB-1).